We begin with the raw amino-acid sequence, 116 residues long: Non-specific lipid-transfer protein 8 (116 aa).

Positions 1-24 (MNVLKCLAIISVLGIFFIPRYSES) are cleaved as a signal peptide. 4 disulfide bridges follow: C28–C76, C38–C53, C54–C98, and C74–C112.

It belongs to the plant LTP family.

Functionally, plant non-specific lipid-transfer proteins transfer phospholipids as well as galactolipids across membranes. May play a role in wax or cutin deposition in the cell walls of expanding epidermal cells and certain secretory tissues. The protein is Non-specific lipid-transfer protein 8 (LTP8) of Arabidopsis thaliana (Mouse-ear cress).